Reading from the N-terminus, the 294-residue chain is Nucleotide-binding protein CLD_1131 (294 aa).

8 to 15 (GLSGAGKT) lines the ATP pocket. 59–62 (DIRG) contributes to the GTP binding site.

This sequence belongs to the RapZ-like family.

Functionally, displays ATPase and GTPase activities. The polypeptide is Nucleotide-binding protein CLD_1131 (Clostridium botulinum (strain Okra / Type B1)).